The sequence spans 612 residues: Cytokine-like nuclear factor N-PAC (612 aa).

The PWWP domain maps to proline 22–proline 81. A disordered region spans residues alanine 168–arginine 270. Low complexity-rich tracts occupy residues serine 177 to serine 193 and alanine 201 to serine 220. The span at alanine 228–leucine 240 shows a compositional bias: polar residues. An interaction with histone H3 region spans residues aspartate 276–leucine 279. A dehydrogenase domain region spans residues arginine 319 to phenylalanine 612. Residues glycine 329–aspartate 343, threonine 421, and arginine 564 contribute to the NAD(+) site.

It belongs to the HIBADH-related family. NP60 subfamily. As to quaternary structure, binds to mononucleosomes. Interacts with male-specific lethal (MSL) histone acetyltransferase complex at least composed of mof, msl-1, msl-2 and msl-3.

The protein localises to the chromosome. Its function is as follows. Nucleosome-destabilizing factor that is recruited to genes during transcriptional activation and colocalizes with a subset of trimethylated 'Lys-36' histone H3 (H3K36me3)-enriched regions. Binds DNA (in vitro). Facilitates Pol II transcription through nucleosomes. Facilitates male-specific lethal (MSL) histone acetyltransferase complex targeting to active genes on the X chromosome. Stimulates the acetylation of 'Lys-56' of nucleosomal histone H3 (H3K56ac) by nej. The sequence is that of Cytokine-like nuclear factor N-PAC from Drosophila pseudoobscura pseudoobscura (Fruit fly).